A 305-amino-acid polypeptide reads, in one-letter code: Cytochrome c biogenesis protein CcsA (305 aa).

The next 8 helical transmembrane spans lie at 11–31 (ANAS…KAIF), 36–56 (ILQL…ALLL), 75–95 (LMFL…YIQI), 97–117 (FIGF…TFFL), 142–162 (IMMA…AFLF), 212–232 (TIGI…VWAN), 239–259 (WSWD…AIYL), and 273–293 (AIVA…VNLL).

Belongs to the CcmF/CycK/Ccl1/NrfE/CcsA family. In terms of assembly, may interact with Ccs1.

The protein localises to the plastid. The protein resides in the chloroplast thylakoid membrane. In terms of biological role, required during biogenesis of c-type cytochromes (cytochrome c6 and cytochrome f) at the step of heme attachment. In Mesostigma viride (Green alga), this protein is Cytochrome c biogenesis protein CcsA.